A 499-amino-acid polypeptide reads, in one-letter code: Interleukin-17 receptor B (499 aa).

A signal peptide spans 1–17 (MLLVLLILAASCRSALP). The Extracellular segment spans residues 18–286 (REPTIQCGSE…PDDNRRMLGG (269 aa)). 4 N-linked (GlcNAc...) asparagine glycosylation sites follow: asparagine 67, asparagine 103, asparagine 156, and asparagine 197. Residues 287–307 (WLPLFLVLLVAVWVLAAGIYL) traverse the membrane as a helical segment. Residues 308–499 (TWRQGRSTKT…QACHDSCSPL (192 aa)) are Cytoplasmic-facing. In terms of domain architecture, SEFIR spans 328–474 (LIKVLVVYPS…LMKDATAFHT (147 aa)).

In terms of assembly, interacts with DAZAP2. Interacts with TRAF3IP2. Liver and testis. Expressed at lower level in kidney and lung. Expressed in selected T-cell, B-cell and myeloid cell lines.

It is found in the cell membrane. The protein localises to the secreted. In terms of biological role, receptor for the pro-inflammatory cytokines IL17B and IL17E. May play a role in controlling the growth and/or differentiation of hematopoietic cells. This chain is Interleukin-17 receptor B (Il17rb), found in Mus musculus (Mouse).